The sequence spans 425 residues: Glutamate-1-semialdehyde 2,1-aminomutase (425 aa).

Lys265 carries the post-translational modification N6-(pyridoxal phosphate)lysine.

The protein belongs to the class-III pyridoxal-phosphate-dependent aminotransferase family. HemL subfamily. As to quaternary structure, homodimer. Pyridoxal 5'-phosphate serves as cofactor.

The protein resides in the cytoplasm. The enzyme catalyses (S)-4-amino-5-oxopentanoate = 5-aminolevulinate. Its pathway is porphyrin-containing compound metabolism; protoporphyrin-IX biosynthesis; 5-aminolevulinate from L-glutamyl-tRNA(Glu): step 2/2. The chain is Glutamate-1-semialdehyde 2,1-aminomutase from Clostridium perfringens (strain 13 / Type A).